The sequence spans 205 residues: Proteasome subunit beta (205 aa).

A propeptide spans 1–8 (removed in mature form; by autocatalysis); that stretch reads MDDKQYKG. The active-site Nucleophile is the Thr9.

Belongs to the peptidase T1B family. In terms of assembly, the 20S proteasome core is composed of 14 alpha and 14 beta subunits that assemble into four stacked heptameric rings, resulting in a barrel-shaped structure. The two inner rings, each composed of seven catalytic beta subunits, are sandwiched by two outer rings, each composed of seven alpha subunits. The catalytic chamber with the active sites is on the inside of the barrel. Has a gated structure, the ends of the cylinder being occluded by the N-termini of the alpha-subunits. Is capped at one or both ends by the proteasome regulatory ATPase, PAN.

The protein resides in the cytoplasm. The enzyme catalyses Cleavage of peptide bonds with very broad specificity.. Its activity is regulated as follows. The formation of the proteasomal ATPase PAN-20S proteasome complex, via the docking of the C-termini of PAN into the intersubunit pockets in the alpha-rings, triggers opening of the gate for substrate entry. Interconversion between the open-gate and close-gate conformations leads to a dynamic regulation of the 20S proteasome proteolysis activity. Component of the proteasome core, a large protease complex with broad specificity involved in protein degradation. The sequence is that of Proteasome subunit beta from Methanocella paludicola (strain DSM 17711 / JCM 13418 / NBRC 101707 / SANAE).